The chain runs to 63 residues: Large ribosomal subunit protein uL29 (63 aa).

This sequence belongs to the universal ribosomal protein uL29 family.

The sequence is that of Large ribosomal subunit protein uL29 (rpmC) from Buchnera aphidicola subsp. Acyrthosiphon kondoi (Acyrthosiphon kondoi symbiotic bacterium).